We begin with the raw amino-acid sequence, 159 residues long: Phosphopantetheine adenylyltransferase (159 aa).

Serine 9 contacts substrate. ATP contacts are provided by residues 9–10 (SF) and histidine 17. Residues lysine 41, leucine 73, and lysine 87 each contribute to the substrate site. ATP is bound by residues 88–90 (GLR), glutamate 98, and 123–129 (YGYLSSS).

It belongs to the bacterial CoaD family. As to quaternary structure, homohexamer. The cofactor is Mg(2+).

The protein resides in the cytoplasm. The enzyme catalyses (R)-4'-phosphopantetheine + ATP + H(+) = 3'-dephospho-CoA + diphosphate. It participates in cofactor biosynthesis; coenzyme A biosynthesis; CoA from (R)-pantothenate: step 4/5. Reversibly transfers an adenylyl group from ATP to 4'-phosphopantetheine, yielding dephospho-CoA (dPCoA) and pyrophosphate. In Thermoanaerobacter pseudethanolicus (strain ATCC 33223 / 39E) (Clostridium thermohydrosulfuricum), this protein is Phosphopantetheine adenylyltransferase.